A 414-amino-acid polypeptide reads, in one-letter code: MLQKPRGTQDFFLDEAKLWNKVETKLKEILDQFNYSEIRTPMFESKELFIRSIGSTTDIVSKEMYEFVDKKNRSLVLKPEGTASVVRAVIENKLYAEENLPLKVYYISPMFRYERPQNGRYRQFHQLGIEVFGSDSIQQDYEVLNIATKIINQFKLNKNIKIYTNFLITGKNREDYILELKKYLSDFKLCNDCNTRLEKNPLRVLDCKIDDKQFKNVPSMQDFLTKEQKTRYDQTLELFKKTNISVIHDDKLVRGLDYYTGFIFEIKYLNNNNEQTIIAGGRYNNLVNEIGNINLAACGFGMGLERFINIIKEQNSSLVNQKTNIDLYTICIDDLAIELNQQILDLTRSIGLKADSNYYHLSLKSALKKADKLNPKYVIILGSNEAKTNEFIIKDQINKTQIKTTLTKFIKDLK.

This sequence belongs to the class-II aminoacyl-tRNA synthetase family. In terms of assembly, homodimer.

The protein localises to the cytoplasm. It carries out the reaction tRNA(His) + L-histidine + ATP = L-histidyl-tRNA(His) + AMP + diphosphate + H(+). The protein is Histidine--tRNA ligase of Mycoplasma mycoides subsp. mycoides SC (strain CCUG 32753 / NCTC 10114 / PG1).